The following is a 326-amino-acid chain: Beta-ketoacyl-[acyl-carrier-protein] synthase III (326 aa).

Catalysis depends on residues Cys-120 and His-253. An ACP-binding region spans residues 254-258 (QANIR). Asn-283 is an active-site residue.

The protein belongs to the thiolase-like superfamily. FabH family. In terms of assembly, homodimer.

The protein localises to the cytoplasm. It catalyses the reaction malonyl-[ACP] + acetyl-CoA + H(+) = 3-oxobutanoyl-[ACP] + CO2 + CoA. It functions in the pathway lipid metabolism; fatty acid biosynthesis. Functionally, catalyzes the condensation reaction of fatty acid synthesis by the addition to an acyl acceptor of two carbons from malonyl-ACP. Catalyzes the first condensation reaction which initiates fatty acid synthesis and may therefore play a role in governing the total rate of fatty acid production. Possesses both acetoacetyl-ACP synthase and acetyl transacylase activities. Its substrate specificity determines the biosynthesis of branched-chain and/or straight-chain of fatty acids. This chain is Beta-ketoacyl-[acyl-carrier-protein] synthase III, found in Ralstonia nicotianae (strain ATCC BAA-1114 / GMI1000) (Ralstonia solanacearum).